We begin with the raw amino-acid sequence, 208 residues long: Glutathione S-transferase 1-1 (208 aa).

The 80-residue stretch at 1–80 (MDFYYLPGSA…YLVEKYGKND (80 aa)) folds into the GST N-terminal domain. Residues Ser9, 50-52 (HTI), and 64-66 (ESR) each bind glutathione. Residues 86 to 207 (CPKKRAVINQ…EGCLEFKKFF (122 aa)) form the GST C-terminal domain.

It belongs to the GST superfamily. Theta family. In terms of assembly, homodimer.

The catalysed reaction is RX + glutathione = an S-substituted glutathione + a halide anion + H(+). Functionally, conjugation of reduced glutathione to a wide number of exogenous and endogenous hydrophobic electrophiles. This is Glutathione S-transferase 1-1 (GST1) from Lucilia cuprina (Green bottle fly).